The sequence spans 373 residues: Queuine tRNA-ribosyltransferase (373 aa).

Asp-93 (proton acceptor) is an active-site residue. Residues Asp-93–Phe-97, Asp-147, Gln-190, and Gly-219 each bind substrate. The RNA binding stretch occupies residues Gly-250–Asp-256. The active-site Nucleophile is the Asp-269. The tract at residues Thr-274–Arg-278 is RNA binding; important for wobble base 34 recognition. Zn(2+)-binding residues include Cys-307, Cys-309, Cys-312, and His-338.

Belongs to the queuine tRNA-ribosyltransferase family. In terms of assembly, homodimer. Within each dimer, one monomer is responsible for RNA recognition and catalysis, while the other monomer binds to the replacement base PreQ1. Zn(2+) serves as cofactor.

The enzyme catalyses 7-aminomethyl-7-carbaguanine + guanosine(34) in tRNA = 7-aminomethyl-7-carbaguanosine(34) in tRNA + guanine. It functions in the pathway tRNA modification; tRNA-queuosine biosynthesis. Its function is as follows. Catalyzes the base-exchange of a guanine (G) residue with the queuine precursor 7-aminomethyl-7-deazaguanine (PreQ1) at position 34 (anticodon wobble position) in tRNAs with GU(N) anticodons (tRNA-Asp, -Asn, -His and -Tyr). Catalysis occurs through a double-displacement mechanism. The nucleophile active site attacks the C1' of nucleotide 34 to detach the guanine base from the RNA, forming a covalent enzyme-RNA intermediate. The proton acceptor active site deprotonates the incoming PreQ1, allowing a nucleophilic attack on the C1' of the ribose to form the product. After dissociation, two additional enzymatic reactions on the tRNA convert PreQ1 to queuine (Q), resulting in the hypermodified nucleoside queuosine (7-(((4,5-cis-dihydroxy-2-cyclopenten-1-yl)amino)methyl)-7-deazaguanosine). This is Queuine tRNA-ribosyltransferase from Fusobacterium nucleatum subsp. nucleatum (strain ATCC 25586 / DSM 15643 / BCRC 10681 / CIP 101130 / JCM 8532 / KCTC 2640 / LMG 13131 / VPI 4355).